A 231-amino-acid polypeptide reads, in one-letter code: Small ribosomal subunit protein uS3 (231 aa).

One can recognise a KH type-2 domain in the interval 18 to 97; sequence VDEYLAKQFY…NPELNARVMA (80 aa).

Belongs to the universal ribosomal protein uS3 family. As to quaternary structure, part of the 30S ribosomal subunit.

Functionally, binds the lower part of the 30S subunit head. This chain is Small ribosomal subunit protein uS3, found in Sulfolobus acidocaldarius (strain ATCC 33909 / DSM 639 / JCM 8929 / NBRC 15157 / NCIMB 11770).